The following is a 309-amino-acid chain: Methionyl-tRNA formyltransferase (309 aa).

107-110 (SLLP) provides a ligand contact to (6S)-5,6,7,8-tetrahydrofolate.

Belongs to the Fmt family.

It catalyses the reaction L-methionyl-tRNA(fMet) + (6R)-10-formyltetrahydrofolate = N-formyl-L-methionyl-tRNA(fMet) + (6S)-5,6,7,8-tetrahydrofolate + H(+). Functionally, attaches a formyl group to the free amino group of methionyl-tRNA(fMet). The formyl group appears to play a dual role in the initiator identity of N-formylmethionyl-tRNA by promoting its recognition by IF2 and preventing the misappropriation of this tRNA by the elongation apparatus. The polypeptide is Methionyl-tRNA formyltransferase (Borrelia turicatae (strain 91E135)).